Reading from the N-terminus, the 186-residue chain is Methylamine dehydrogenase light chain (186 aa).

Positions 1–57 form a signal peptide, tat-type signal; it reads MLGKSQFDDLFEKMSRKVAGHTSRRGFIGRVGTAVAGVALVPLLPVDRRGRVSRANA. 6 disulfides stabilise this stretch: Cys78–Cys143, Cys84–Cys116, Cys91–Cys176, Cys93–Cys141, Cys101–Cys132, and Cys133–Cys164. Trp112 carries the tryptophylquinone modification. The tryptophan tryptophylquinone (Trp-Trp) cross-link spans 112-163; that stretch reads WVASCYNPTDKQSYLISYRDCCGANVSGRCACLNTEGELPVYRPEFGNDIIW.

This sequence belongs to the aromatic amine dehydrogenase light chain family. In terms of assembly, heterotetramer of two light and two heavy chains. It depends on tryptophan tryptophylquinone residue as a cofactor. Post-translationally, predicted to be exported by the Tat system. The position of the signal peptide cleavage has been experimentally proven. Tryptophan tryptophylquinone (TTQ) is formed by oxidation of the indole ring of a tryptophan to form tryptophylquinone followed by covalent cross-linking with another tryptophan residue.

It is found in the periplasm. The catalysed reaction is 2 oxidized [amicyanin] + methylamine + H2O = 2 reduced [amicyanin] + formaldehyde + NH4(+) + 2 H(+). It participates in one-carbon metabolism; methylamine degradation; formaldehyde from methylamine: step 1/1. Functionally, methylamine dehydrogenase carries out the oxidation of methylamine. Electrons are passed from methylamine dehydrogenase to amicyanin. This is Methylamine dehydrogenase light chain (mauA) from Methylorubrum extorquens (strain ATCC 14718 / DSM 1338 / JCM 2805 / NCIMB 9133 / AM1) (Methylobacterium extorquens).